A 367-amino-acid polypeptide reads, in one-letter code: WAT1-related protein At3g28050 (367 aa).

10 consecutive transmembrane segments (helical) span residues Val-10–Phe-30, Phe-40–Phe-60, Phe-73–Gly-93, Thr-103–Phe-123, Thr-142–Ala-162, Trp-179–Val-199, Phe-211–Phe-231, Ile-246–His-266, Leu-276–Phe-296, and Leu-301–Trp-321. 2 consecutive EamA domains span residues Gly-25 to Thr-153 and Leu-195 to Val-319. The interval His-338–Val-367 is disordered.

Belongs to the drug/metabolite transporter (DMT) superfamily. Plant drug/metabolite exporter (P-DME) (TC 2.A.7.4) family.

It localises to the membrane. The polypeptide is WAT1-related protein At3g28050 (Arabidopsis thaliana (Mouse-ear cress)).